A 360-amino-acid chain; its full sequence is DNA replication and repair protein RecF (360 aa).

30–37 (GANGSGKT) contributes to the ATP binding site.

This sequence belongs to the RecF family.

The protein resides in the cytoplasm. Functionally, the RecF protein is involved in DNA metabolism; it is required for DNA replication and normal SOS inducibility. RecF binds preferentially to single-stranded, linear DNA. It also seems to bind ATP. The sequence is that of DNA replication and repair protein RecF from Acinetobacter baumannii (strain ATCC 17978 / DSM 105126 / CIP 53.77 / LMG 1025 / NCDC KC755 / 5377).